The following is a 293-amino-acid chain: MEDYLVKSVAENGQFRAYAVNATALVEEAHQIHDTWSAASAALGRAMVGTLLLATSGLQGEAGMTVKIQGDGPVGFIVVDGTAQGTVKAYMQNPHVHLPLNAKGKIDVAGAVGKTGTLSVTKMAPGDKTPYTGEVNLVSGELGDDFTYYLAQSEQIPSAVGLSVFVQSDDHIEVAGGFLIQVLPGASDEAINHLETTLRELPLVSDLLREGKTPEQILETIFAGRDLKILEKMPVEYKCDCSKDRFEKALASLSKDDLQEMIDNDHGAEAVCRFCGHKYHFSEEELKYLVATK.

Cystine bridges form between cysteine 239–cysteine 241 and cysteine 272–cysteine 275.

The protein belongs to the HSP33 family. Under oxidizing conditions two disulfide bonds are formed involving the reactive cysteines. Under reducing conditions zinc is bound to the reactive cysteines and the protein is inactive.

Its subcellular location is the cytoplasm. Functionally, redox regulated molecular chaperone. Protects both thermally unfolding and oxidatively damaged proteins from irreversible aggregation. Plays an important role in the bacterial defense system toward oxidative stress. The protein is 33 kDa chaperonin of Limosilactobacillus fermentum (strain NBRC 3956 / LMG 18251) (Lactobacillus fermentum).